The sequence spans 218 residues: MGQKINPLGFRLGTTQSHHSLWFAQPKKYSEGLEEDKKIRDCIKNYVQKNIRISSGMEGIARIEIQKRIDLIQIIIYMGFPKLLIEDKPRRVEELQMNVQKELNCVNKKLNIAITRISNPYGDPNILAEFIAGQLKNRVSFRKAMKKAIELTEQANTKGIQVQIAGRIDGKEIARVEWIREGRVPLQTIEAKIDYCSSTVRTIYGVLGIKIWIFVDED.

Residues 47–118 (VQKNIRISSG…KLNIAITRIS (72 aa)) enclose the KH type-2 domain.

The protein belongs to the universal ribosomal protein uS3 family. Part of the 30S ribosomal subunit.

It is found in the plastid. The protein localises to the chloroplast. This chain is Small ribosomal subunit protein uS3c (rps3), found in Crucihimalaya wallichii (Rock-cress).